The following is a 538-amino-acid chain: Pyruvate kinase (538 aa).

Serine 45 is subject to Phosphoserine. Arginine 72 provides a ligand contact to substrate. K(+) contacts are provided by asparagine 74, serine 76, aspartate 107, and threonine 108. 74–77 (NFSH) lines the ATP pocket. ATP contacts are provided by arginine 114 and lysine 200. Residue glutamate 265 coordinates Mg(2+). The substrate site is built by glycine 288, aspartate 289, and threonine 321. Mg(2+) is bound at residue aspartate 289.

The protein belongs to the pyruvate kinase family. In terms of assembly, homotetramer. It depends on Mg(2+) as a cofactor. K(+) serves as cofactor.

The enzyme catalyses pyruvate + ATP = phosphoenolpyruvate + ADP + H(+). The protein operates within carbohydrate degradation; glycolysis; pyruvate from D-glyceraldehyde 3-phosphate: step 5/5. This chain is Pyruvate kinase (pki1), found in Hypocrea jecorina (Trichoderma reesei).